The primary structure comprises 277 residues: Formamidopyrimidine-DNA glycosylase (277 aa).

P2 serves as the catalytic Schiff-base intermediate with DNA. E3 serves as the catalytic Proton donor. K58 (proton donor; for beta-elimination activity) is an active-site residue. DNA contacts are provided by H97, R116, and R158. The FPG-type zinc-finger motif lies at 243–277 (NVYGRAGAPCPRCGRSIRQRRIAQRSTWYCPGCQR). R267 (proton donor; for delta-elimination activity) is an active-site residue.

Belongs to the FPG family. In terms of assembly, monomer. Zn(2+) serves as cofactor.

It carries out the reaction Hydrolysis of DNA containing ring-opened 7-methylguanine residues, releasing 2,6-diamino-4-hydroxy-5-(N-methyl)formamidopyrimidine.. The catalysed reaction is 2'-deoxyribonucleotide-(2'-deoxyribose 5'-phosphate)-2'-deoxyribonucleotide-DNA = a 3'-end 2'-deoxyribonucleotide-(2,3-dehydro-2,3-deoxyribose 5'-phosphate)-DNA + a 5'-end 5'-phospho-2'-deoxyribonucleoside-DNA + H(+). Its function is as follows. Involved in base excision repair of DNA damaged by oxidation or by mutagenic agents. Acts as a DNA glycosylase that recognizes and removes damaged bases. Has a preference for oxidized purines, such as 7,8-dihydro-8-oxoguanine (8-oxoG). Has AP (apurinic/apyrimidinic) lyase activity and introduces nicks in the DNA strand. Cleaves the DNA backbone by beta-delta elimination to generate a single-strand break at the site of the removed base with both 3'- and 5'-phosphates. This chain is Formamidopyrimidine-DNA glycosylase, found in Alkalilimnicola ehrlichii (strain ATCC BAA-1101 / DSM 17681 / MLHE-1).